We begin with the raw amino-acid sequence, 202 residues long: FMN reductase (NADH) RutF 1 (202 aa).

The disordered stretch occupies residues Pro-168–Ala-202. Residues Pro-171 to Ala-196 are compositionally biased toward low complexity.

Belongs to the non-flavoprotein flavin reductase family. RutF subfamily.

The catalysed reaction is FMNH2 + NAD(+) = FMN + NADH + 2 H(+). Its function is as follows. Catalyzes the reduction of FMN to FMNH2 which is used to reduce pyrimidine by RutA via the Rut pathway. This Methylorubrum extorquens (strain PA1) (Methylobacterium extorquens) protein is FMN reductase (NADH) RutF 1.